A 270-amino-acid polypeptide reads, in one-letter code: uncharacterized protein (270 aa).

This is an uncharacterized protein from Methanocaldococcus jannaschii (strain ATCC 43067 / DSM 2661 / JAL-1 / JCM 10045 / NBRC 100440) (Methanococcus jannaschii).